A 320-amino-acid chain; its full sequence is MAERTARLLLLTVTVGLAWGSQGDREPVYRDCVLRCEERNCSGDALKHFRSLQPIYMSLAGWTCRDDCKYECMWITVGLYLQEGHRVPQFHGKWPFSRFLFIQEPASAVASLLNGLASLVMLCRYRASVPASSPMYHTCMAFAWVSLNAWFWSTVFHTRDTDLTEKMDYFCASAVILHSIYLCCVRTVGLQHPSVARAFGATLLLMLLLHTSYLSLVRFDYSYNMMANVAIGLVNLAWWLAWCLRNHRRLPHTRKCVAVVLLLQGLSLLELLDFPPLFWVLDAHAIWHISTIPVHVLFFRFLEDDSLYLLKESEAKFKLD.

The signal sequence occupies residues Met1–Gly20. Residues Ser21–Arg98 are Lumenal-facing. N-linked (GlcNAc...) asparagine glycosylation is present at Asn40. Residues Phe99 to Leu119 traverse the membrane as a helical segment. Over Val120–Met135 the chain is Cytoplasmic. The helical transmembrane segment at Tyr136–Phe156 threads the bilayer. The Lumenal segment spans residues His157–Tyr169. The helical transmembrane segment at Phe170–Leu190 threads the bilayer. Residues Gln191–Ala198 are Cytoplasmic-facing. A helical transmembrane segment spans residues Phe199–Phe219. Residues Asp220–Tyr223 are Lumenal-facing. A helical transmembrane segment spans residues Asn224–Leu244. At Arg245–Ala258 the chain is on the cytoplasmic side. The helical transmembrane segment at Val259–Trp279 threads the bilayer. Residues Val280–Asp282 are Lumenal-facing. The chain crosses the membrane as a helical span at residues Ala283–Glu303. Over Asp304 to Asp320 the chain is Cytoplasmic.

It belongs to the PGAP3 family.

Its subcellular location is the golgi apparatus membrane. Functionally, involved in the fatty acid remodeling steps of GPI-anchor maturation where the unsaturated acyl chain at sn-2 of inositol phosphate is replaced by a saturated stearoyl chain. May catalyze the first step of the fatty acid remodeling, by removing the unsaturated acyl chain at sn-2 of inositol phosphate, generating a lyso-GPI intermediate. The fatty acid remodeling steps is critical for the integration of GPI-APs into lipid rafts. The polypeptide is GPI-specific phospholipase A2-like PGAP3 (PGAP3) (Cricetulus griseus (Chinese hamster)).